A 380-amino-acid polypeptide reads, in one-letter code: Serpin B7 (380 aa).

At S217 the chain carries Phosphoserine.

It belongs to the serpin family. Ov-serpin subfamily.

It localises to the cytoplasm. Might function as an inhibitor of Lys-specific proteases. Might influence the maturation of megakaryocytes via its action as a serpin. This Mus musculus (Mouse) protein is Serpin B7 (Serpinb7).